The chain runs to 707 residues: Polyribonucleotide nucleotidyltransferase (707 aa).

Positions 485 and 491 each coordinate Mg(2+). Residues 552–611 (PRIYTMKIDPKKIKDVIGKGGATIRTLTEETGTSIDIDDDGTVKIAAIDGNAVKEVMARI) enclose the KH domain. The S1 motif domain maps to 621–689 (GAVYTGKVTR…RQGRIRLTMK (69 aa)).

Belongs to the polyribonucleotide nucleotidyltransferase family. In terms of assembly, component of the RNA degradosome, which is a multiprotein complex involved in RNA processing and mRNA degradation. Mg(2+) serves as cofactor.

It is found in the cytoplasm. It catalyses the reaction RNA(n+1) + phosphate = RNA(n) + a ribonucleoside 5'-diphosphate. Functionally, involved in mRNA degradation. Catalyzes the phosphorolysis of single-stranded polyribonucleotides processively in the 3'- to 5'-direction. In Actinobacillus succinogenes (strain ATCC 55618 / DSM 22257 / CCUG 43843 / 130Z), this protein is Polyribonucleotide nucleotidyltransferase.